A 369-amino-acid polypeptide reads, in one-letter code: Dehydrogenase pigH (369 aa).

In terms of domain architecture, Enoyl reductase (ER) spans 13-367 (KAPLLEVKAA…QGVSAKKIVV (355 aa)). 44 to 49 (IDWLIQ) provides a ligand contact to NADP(+). Asparagine 79 and asparagine 101 each carry an N-linked (GlcNAc...) asparagine glycan. Residues 197–200 (SRKN) and tyrosine 215 contribute to the NADP(+) site. The chain crosses the membrane as a helical span at residues 280–300 (TIIFFVSWIISFKFKGLLKGI). 360–361 (VS) contacts NADP(+).

It belongs to the zinc-containing alcohol dehydrogenase family.

The protein resides in the membrane. The protein operates within secondary metabolite biosynthesis. Dehydrogenase; part of the gene cluster that mediates the biosynthesis of azaphilone pigments (MonAzPs), a complex mixture of compounds with a common azaphilone skeleton very widely used as food colorants. Within the pathway, pigH might be involved in the late steps of yellow pigments monascin and ankaflavin biosynthesis. The first step of the pathway is performed by the nrPKS pigA that forms the hexaketide precursor from successive condensations of five malonyl-CoA units, with a simple acetyl-CoA starter unit. The role of esterase pigG is not clear, but it may play at most a supplementary role in the formation of the benzaldehyde produced by the pigA nrPKS. This very reactive benzaldehyde is intercepted by the pigC ketoreductase that to provide the first stable enzyme-free MonAzPs intermediate, 6-(4-hydroxy-2-oxopentyl)-3-methyl-2,4-dioxocyclohexane carbaldehyde, also known as M7PKS-1. The FAD-dependent monooxygenase pigN hydroxylates M7PKS-1 at C-4, which triggers the formation of the pyran ring. PigJ, pigK and pigD are involved in the acetylation of the pyran ring. PigJ and pigK form the two subunits of a dedicated fungal FAS that produces the side chain fatty acyl moiety of MonAzPs and pigD transfers the fatty acyl chain to the C-4 alcohol. PigM and pigO are involved in the elimination of the omega-1 alcohol. PigM acts as an O-acetyltransferase that synthesizes the putative O-11 acetyl intermediate whereas pigO eliminates acetic acid to yield an intermediate with a C10(11) double bond. The dehydration of the C-11 alcohol followed by the reduction of the C6(7) double bond by the NAD(P)H-dependent oxidoreductase pigE increases the electrophilicity of the C-5 ketone of the resulting acyl benzopyran. This in turn sets up the C-5 ketone for an intramolecular Knoevenagel aldol condensation with the C-20 enol of the side chain. This condensation affords the characteristic linear tricyclic carbon skeletons of the yellow pigments that serve as the common precursors for the classical yellow pigments monascin and ankaflavin, orange pigments rubopunctatin and monascorubrin, and red pigments ribropunctamine and monascorubramine. The FAD-dependent oxidoreductase pigF is especially invoved in the biosynthesis of orange and red pigments via desaturation of C6(7). The polypeptide is Dehydrogenase pigH (Monascus ruber (Mold)).